The primary structure comprises 451 residues: Arginine biosynthesis bifunctional protein ArgJ, mitochondrial (451 aa).

Substrate contacts are provided by Thr180, Lys209, Thr220, Glu307, Asn446, and Thr451. The active-site Nucleophile is the Thr220.

Belongs to the ArgJ family. In terms of assembly, heterodimer of an alpha and a beta chain. Post-translationally, the alpha and beta chains are autoproteolytically processed from a single precursor protein within the mitochondrion.

It is found in the mitochondrion matrix. It catalyses the reaction N(2)-acetyl-L-ornithine + L-glutamate = N-acetyl-L-glutamate + L-ornithine. The enzyme catalyses L-glutamate + acetyl-CoA = N-acetyl-L-glutamate + CoA + H(+). Its pathway is amino-acid biosynthesis; L-arginine biosynthesis; L-ornithine and N-acetyl-L-glutamate from L-glutamate and N(2)-acetyl-L-ornithine (cyclic): step 1/1. It participates in amino-acid biosynthesis; L-arginine biosynthesis; N(2)-acetyl-L-ornithine from L-glutamate: step 1/4. Its function is as follows. Catalyzes two activities which are involved in the cyclic version of arginine biosynthesis: the synthesis of acetylglutamate from glutamate and acetyl-CoA, and of ornithine by transacetylation between acetylornithine and glutamate. This chain is Arginine biosynthesis bifunctional protein ArgJ, mitochondrial, found in Fusarium vanettenii (strain ATCC MYA-4622 / CBS 123669 / FGSC 9596 / NRRL 45880 / 77-13-4) (Fusarium solani subsp. pisi).